A 102-amino-acid polypeptide reads, in one-letter code: Large ribosomal subunit protein bL21 (102 aa).

Belongs to the bacterial ribosomal protein bL21 family. As to quaternary structure, part of the 50S ribosomal subunit. Contacts protein L20.

Functionally, this protein binds to 23S rRNA in the presence of protein L20. In Enterococcus faecalis (strain ATCC 700802 / V583), this protein is Large ribosomal subunit protein bL21.